Reading from the N-terminus, the 521-residue chain is Cytochrome P450 monooxygenase 105 (521 aa).

The helical transmembrane segment at 12–32 (GVASPATLAVAAVTFLTALVL) threads the bilayer. Residues N218, N274, and N317 are each glycosylated (N-linked (GlcNAc...) asparagine). C449 contributes to the heme binding site.

This sequence belongs to the cytochrome P450 family. Heme serves as cofactor.

The protein localises to the membrane. Its pathway is secondary metabolite biosynthesis. Its function is as follows. Cytochrome P450 monooxygenase that is able to use anthracene, carbazole, pyrene, phenanthrene and trans-stilbene as substrates for oxidation. These multifunctional properties against a series of polycyclic aromatic hydrocarbons (PAHs) suggest that CYP105 would play important roles, at least in part, in fungal metabolic systems involved in xenobiotic detoxification. The sequence is that of Cytochrome P450 monooxygenase 105 from Postia placenta (strain ATCC 44394 / Madison 698-R) (Brown rot fungus).